We begin with the raw amino-acid sequence, 396 residues long: Phosphoglycerate kinase (396 aa).

Residues 22–24, R37, 60–63, R118, and R151 contribute to the substrate site; these read DFN and HFGR. Residues K201, E322, and 352 to 355 contribute to the ATP site; that span reads GGDS.

Belongs to the phosphoglycerate kinase family. In terms of assembly, monomer.

The protein localises to the cytoplasm. It carries out the reaction (2R)-3-phosphoglycerate + ATP = (2R)-3-phospho-glyceroyl phosphate + ADP. The protein operates within carbohydrate degradation; glycolysis; pyruvate from D-glyceraldehyde 3-phosphate: step 2/5. The chain is Phosphoglycerate kinase from Wolbachia pipientis subsp. Culex pipiens (strain wPip).